A 79-amino-acid chain; its full sequence is Small ribosomal subunit protein uS17 (79 aa).

It belongs to the universal ribosomal protein uS17 family. Part of the 30S ribosomal subunit.

Its function is as follows. One of the primary rRNA binding proteins, it binds specifically to the 5'-end of 16S ribosomal RNA. The polypeptide is Small ribosomal subunit protein uS17 (Caulobacter vibrioides (strain NA1000 / CB15N) (Caulobacter crescentus)).